The following is a 179-amino-acid chain: tRNA-splicing endonuclease (179 aa).

Catalysis depends on residues Tyr115, His123, and Lys154.

Belongs to the tRNA-intron endonuclease family. Archaeal short subfamily. In terms of assembly, homotetramer; although the tetramer contains four active sites, only two participate in the cleavage. Therefore, it should be considered as a dimer of dimers.

The catalysed reaction is pretRNA = a 3'-half-tRNA molecule with a 5'-OH end + a 5'-half-tRNA molecule with a 2',3'-cyclic phosphate end + an intron with a 2',3'-cyclic phosphate and a 5'-hydroxyl terminus.. Functionally, endonuclease that removes tRNA introns. Cleaves pre-tRNA at the 5'- and 3'-splice sites to release the intron. The products are an intron and two tRNA half-molecules bearing 2',3' cyclic phosphate and 5'-OH termini. Recognizes a pseudosymmetric substrate in which 2 bulged loops of 3 bases are separated by a stem of 4 bp. In Methanopyrus kandleri (strain AV19 / DSM 6324 / JCM 9639 / NBRC 100938), this protein is tRNA-splicing endonuclease.